The following is a 360-amino-acid chain: Mitogen-activated protein kinase 14 (360 aa).

At S2 the chain carries N-acetylserine. S2 is modified (phosphoserine). The residue at position 16 (T16) is a Phosphothreonine. The region spanning 24–308 (YQNLSPVGSG…AAQALAHAYF (285 aa)) is the Protein kinase domain. ATP contacts are provided by residues 30–38 (VGSGAYGSV) and K53. Residues K53 and K152 each carry the N6-acetyllysine modification. D168 serves as the catalytic Proton acceptor. Position 180 is a phosphothreonine; by MAP2K3, MAP2K4, MAP2K6 and autocatalysis (T180). The TXY motif lies at 180-182 (TGY). Y182 carries the phosphotyrosine; by MAP2K3, MAP2K4, MAP2K6 and autocatalysis modification. T263 is modified (phosphothreonine). Y323 bears the Phosphotyrosine; by ZAP70 mark.

Belongs to the protein kinase superfamily. CMGC Ser/Thr protein kinase family. MAP kinase subfamily. Component of a signaling complex containing at least AKAP13, PKN1, MAPK14, ZAK and MAP2K3. Within this complex, AKAP13 interacts directly with PKN1, which in turn recruits MAPK14, MAP2K3 and ZAK. Binds to a kinase interaction motif within the protein tyrosine phosphatase, PTPRR. This interaction retains MAPK14 in the cytoplasm and prevents nuclear accumulation. Interacts with SPAG9 and GADD45A. Interacts with CDC25B, CDC25C, DUSP1, DUSP10, DUSP16, NP60, SUPT20H and TAB1. Interacts with casein kinase II subunits CSNK2A1 and CSNK2B. Interacts with PPM1D. Interacts with CDK5RAP3; recruits PPM1D to MAPK14 and may regulate its dephosphorylation. Interacts with DUSP2; this interaction does not lead to catalytic activation of DUSP2 and dephosphrylation of MAPK14. Mg(2+) serves as cofactor. Dually phosphorylated on Thr-180 and Tyr-182 by the MAP2Ks MAP2K3/MKK3, MAP2K4/MKK4 and MAP2K6/MKK6 in response to inflammatory citokines, environmental stress or growth factors, which activates the enzyme. Dual phosphorylation can also be mediated by TAB1-mediated autophosphorylation. TCR engagement in T-cells also leads to Tyr-323 phosphorylation by ZAP70. Dephosphorylated and inactivated by DUPS1, DUSP10 and DUSP16. PPM1D also mediates dephosphorylation and inactivation of MAPK14. Post-translationally, acetylated at Lys-53 and Lys-152 by KAT2B and EP300. Acetylation at Lys-53 increases the affinity for ATP and enhances kinase activity. Lys-53 and Lys-152 are deacetylated by HDAC3. In terms of processing, ubiquitinated. Ubiquitination leads to degradation by the proteasome pathway. In terms of tissue distribution, brain, heart, placenta, pancreas and skeletal muscle. Expressed to a lesser extent in lung, liver and kidney.

It localises to the cytoplasm. Its subcellular location is the nucleus. It catalyses the reaction L-seryl-[protein] + ATP = O-phospho-L-seryl-[protein] + ADP + H(+). The catalysed reaction is L-threonyl-[protein] + ATP = O-phospho-L-threonyl-[protein] + ADP + H(+). Activated by cell stresses such as DNA damage, heat shock, osmotic shock, anisomycin and sodium arsenite, as well as pro-inflammatory stimuli such as bacterial lipopolysaccharide (LPS) and interleukin-1. Activation occurs through dual phosphorylation of Thr-180 and Tyr-182 by either of two dual specificity kinases, MAP2K3/MKK3 or MAP2K6/MKK6, and potentially also MAP2K4/MKK4, as well as by TAB1-mediated autophosphorylation. MAPK14 phosphorylated on both Thr-180 and Tyr-182 is 10-20-fold more active than MAPK14 phosphorylated only on Thr-180, whereas MAPK14 phosphorylated on Tyr-182 alone is inactive. whereas Thr-180 is necessary for catalysis, Tyr-182 may be required for auto-activation and substrate recognition. Phosphorylated at Tyr-323 by ZAP70 in an alternative activation pathway in response to TCR signaling in T-cells. This alternative pathway is inhibited by GADD45A. Inhibited by dual specificity phosphatases, such as DUSP1, DUSP10, and DUSP16. Specifically inhibited by the binding of pyridinyl-imidazole compounds, which are cytokine-suppressive anti-inflammatory drugs (CSAID). Isoform Mxi2 is 100-fold less sensitive to these agents than the other isoforms and is not inhibited by DUSP1. Isoform Exip is not activated by MAP2K6. SB203580 is an inhibitor of MAPK14. Its function is as follows. Serine/threonine kinase which acts as an essential component of the MAP kinase signal transduction pathway. MAPK14 is one of the four p38 MAPKs which play an important role in the cascades of cellular responses evoked by extracellular stimuli such as pro-inflammatory cytokines or physical stress leading to direct activation of transcription factors. Accordingly, p38 MAPKs phosphorylate a broad range of proteins and it has been estimated that they may have approximately 200 to 300 substrates each. Some of the targets are downstream kinases which are activated through phosphorylation and further phosphorylate additional targets. RPS6KA5/MSK1 and RPS6KA4/MSK2 can directly phosphorylate and activate transcription factors such as CREB1, ATF1, the NF-kappa-B isoform RELA/NFKB3, STAT1 and STAT3, but can also phosphorylate histone H3 and the nucleosomal protein HMGN1. RPS6KA5/MSK1 and RPS6KA4/MSK2 play important roles in the rapid induction of immediate-early genes in response to stress or mitogenic stimuli, either by inducing chromatin remodeling or by recruiting the transcription machinery. On the other hand, two other kinase targets, MAPKAPK2/MK2 and MAPKAPK3/MK3, participate in the control of gene expression mostly at the post-transcriptional level, by phosphorylating ZFP36 (tristetraprolin) and ELAVL1, and by regulating EEF2K, which is important for the elongation of mRNA during translation. MKNK1/MNK1 and MKNK2/MNK2, two other kinases activated by p38 MAPKs, regulate protein synthesis by phosphorylating the initiation factor EIF4E2. MAPK14 also interacts with casein kinase II, leading to its activation through autophosphorylation and further phosphorylation of TP53/p53. In the cytoplasm, the p38 MAPK pathway is an important regulator of protein turnover. For example, CFLAR is an inhibitor of TNF-induced apoptosis whose proteasome-mediated degradation is regulated by p38 MAPK phosphorylation. In a similar way, MAPK14 phosphorylates the ubiquitin ligase SIAH2, regulating its activity towards EGLN3. MAPK14 may also inhibit the lysosomal degradation pathway of autophagy by interfering with the intracellular trafficking of the transmembrane protein ATG9. Another function of MAPK14 is to regulate the endocytosis of membrane receptors by different mechanisms that impinge on the small GTPase RAB5A. In addition, clathrin-mediated EGFR internalization induced by inflammatory cytokines and UV irradiation depends on MAPK14-mediated phosphorylation of EGFR itself as well as of RAB5A effectors. Ectodomain shedding of transmembrane proteins is regulated by p38 MAPKs as well. In response to inflammatory stimuli, p38 MAPKs phosphorylate the membrane-associated metalloprotease ADAM17. Such phosphorylation is required for ADAM17-mediated ectodomain shedding of TGF-alpha family ligands, which results in the activation of EGFR signaling and cell proliferation. Another p38 MAPK substrate is FGFR1. FGFR1 can be translocated from the extracellular space into the cytosol and nucleus of target cells, and regulates processes such as rRNA synthesis and cell growth. FGFR1 translocation requires p38 MAPK activation. In the nucleus, many transcription factors are phosphorylated and activated by p38 MAPKs in response to different stimuli. Classical examples include ATF1, ATF2, ATF6, ELK1, PTPRH, DDIT3, TP53/p53 and MEF2C and MEF2A. The p38 MAPKs are emerging as important modulators of gene expression by regulating chromatin modifiers and remodelers. The promoters of several genes involved in the inflammatory response, such as IL6, IL8 and IL12B, display a p38 MAPK-dependent enrichment of histone H3 phosphorylation on 'Ser-10' (H3S10ph) in LPS-stimulated myeloid cells. This phosphorylation enhances the accessibility of the cryptic NF-kappa-B-binding sites marking promoters for increased NF-kappa-B recruitment. Phosphorylates CDC25B and CDC25C which is required for binding to 14-3-3 proteins and leads to initiation of a G2 delay after ultraviolet radiation. Phosphorylates TIAR following DNA damage, releasing TIAR from GADD45A mRNA and preventing mRNA degradation. The p38 MAPKs may also have kinase-independent roles, which are thought to be due to the binding to targets in the absence of phosphorylation. Protein O-Glc-N-acylation catalyzed by the OGT is regulated by MAPK14, and, although OGT does not seem to be phosphorylated by MAPK14, their interaction increases upon MAPK14 activation induced by glucose deprivation. This interaction may regulate OGT activity by recruiting it to specific targets such as neurofilament H, stimulating its O-Glc-N-acylation. Required in mid-fetal development for the growth of embryo-derived blood vessels in the labyrinth layer of the placenta. Also plays an essential role in developmental and stress-induced erythropoiesis, through regulation of EPO gene expression. Isoform MXI2 activation is stimulated by mitogens and oxidative stress and only poorly phosphorylates ELK1 and ATF2. Isoform EXIP may play a role in the early onset of apoptosis. Phosphorylates S100A9 at 'Thr-113'. Phosphorylates NLRP1 downstream of MAP3K20/ZAK in response to UV-B irradiation and ribosome collisions, promoting activation of the NLRP1 inflammasome and pyroptosis. In terms of biological role, (Microbial infection) Activated by phosphorylation by M.tuberculosis EsxA in T-cells leading to inhibition of IFN-gamma production; phosphorylation is apparent within 15 minutes and is inhibited by kinase-specific inhibitors SB203580 and siRNA. The protein is Mitogen-activated protein kinase 14 of Homo sapiens (Human).